The following is a 148-amino-acid chain: Endoribonuclease YbeY (148 aa).

Histidine 102, histidine 106, and histidine 112 together coordinate Zn(2+).

It belongs to the endoribonuclease YbeY family. Zn(2+) serves as cofactor.

Its subcellular location is the cytoplasm. In terms of biological role, single strand-specific metallo-endoribonuclease involved in late-stage 70S ribosome quality control and in maturation of the 3' terminus of the 16S rRNA. This chain is Endoribonuclease YbeY, found in Phytoplasma mali (strain AT).